We begin with the raw amino-acid sequence, 192 residues long: Xanthine phosphoribosyltransferase (192 aa).

Residues Leu-20 and Asn-27 each coordinate xanthine. Ala-128–Ala-132 serves as a coordination point for 5-phospho-alpha-D-ribose 1-diphosphate. Lys-156 is a xanthine binding site.

The protein belongs to the purine/pyrimidine phosphoribosyltransferase family. Xpt subfamily. Homodimer.

The protein resides in the cytoplasm. It catalyses the reaction XMP + diphosphate = xanthine + 5-phospho-alpha-D-ribose 1-diphosphate. It participates in purine metabolism; XMP biosynthesis via salvage pathway; XMP from xanthine: step 1/1. Functionally, converts the preformed base xanthine, a product of nucleic acid breakdown, to xanthosine 5'-monophosphate (XMP), so it can be reused for RNA or DNA synthesis. This Lactobacillus acidophilus (strain ATCC 700396 / NCK56 / N2 / NCFM) protein is Xanthine phosphoribosyltransferase.